A 380-amino-acid chain; its full sequence is Alkanesulfonate monooxygenase (380 aa).

This sequence belongs to the SsuD family. As to quaternary structure, homotetramer.

The catalysed reaction is an alkanesulfonate + FMNH2 + O2 = an aldehyde + FMN + sulfite + H2O + 2 H(+). Catalyzes the desulfonation of aliphatic sulfonates. The protein is Alkanesulfonate monooxygenase of Pectobacterium atrosepticum (strain SCRI 1043 / ATCC BAA-672) (Erwinia carotovora subsp. atroseptica).